The primary structure comprises 335 residues: Phosphate acyltransferase (335 aa).

The protein belongs to the PlsX family. Homodimer. Probably interacts with PlsY.

Its subcellular location is the cytoplasm. It carries out the reaction a fatty acyl-[ACP] + phosphate = an acyl phosphate + holo-[ACP]. Its pathway is lipid metabolism; phospholipid metabolism. Functionally, catalyzes the reversible formation of acyl-phosphate (acyl-PO(4)) from acyl-[acyl-carrier-protein] (acyl-ACP). This enzyme utilizes acyl-ACP as fatty acyl donor, but not acyl-CoA. The polypeptide is Phosphate acyltransferase (Streptococcus equi subsp. zooepidemicus (strain MGCS10565)).